A 372-amino-acid chain; its full sequence is tRNA-specific 2-thiouridylase MnmA (372 aa).

ATP-binding positions include 16–23 (GMSGGVDS) and Met-42. The interval 102-104 (NPD) is interaction with target base in tRNA. Catalysis depends on Cys-107, which acts as the Nucleophile. Cysteines 107 and 205 form a disulfide. Gly-132 contacts ATP. The tract at residues 155 to 157 (KDQ) is interaction with tRNA. Residue Cys-205 is the Cysteine persulfide intermediate of the active site. The interval 317 to 318 (RY) is interaction with tRNA.

It belongs to the MnmA/TRMU family.

The protein localises to the cytoplasm. It catalyses the reaction S-sulfanyl-L-cysteinyl-[protein] + uridine(34) in tRNA + AH2 + ATP = 2-thiouridine(34) in tRNA + L-cysteinyl-[protein] + A + AMP + diphosphate + H(+). Its function is as follows. Catalyzes the 2-thiolation of uridine at the wobble position (U34) of tRNA, leading to the formation of s(2)U34. This chain is tRNA-specific 2-thiouridylase MnmA, found in Shewanella frigidimarina (strain NCIMB 400).